The sequence spans 459 residues: Chromosomal replication initiator protein DnaA (459 aa).

The interval 1–90 (MAVSLWQQCI…RPASKPAAPA (90 aa)) is domain I, interacts with DnaA modulators. The disordered stretch occupies residues 75–124 (RFDIGSRPASKPAAPAASTKSPVAPAAKSPSKPSFNSNEPAATANHRSNM). A compositionally biased stretch (low complexity) spans 80-108 (SRPASKPAAPAASTKSPVAPAAKSPSKPS). The segment at 91–122 (ASTKSPVAPAAKSPSKPSFNSNEPAATANHRS) is domain II. Residues 109–124 (FNSNEPAATANHRSNM) are compositionally biased toward polar residues. The segment at 123–339 (NMNPTYQFDN…GALNRVIANA (217 aa)) is domain III, AAA+ region. 4 residues coordinate ATP: Gly-167, Gly-169, Lys-170, and Thr-171. A domain IV, binds dsDNA region spans residues 340–459 (NFTGRPITID…YANLIRTLSS (120 aa)).

It belongs to the DnaA family. Oligomerizes as a right-handed, spiral filament on DNA at oriC.

It localises to the cytoplasm. Functionally, plays an essential role in the initiation and regulation of chromosomal replication. ATP-DnaA binds to the origin of replication (oriC) to initiate formation of the DNA replication initiation complex once per cell cycle. Binds the DnaA box (a 9 base pair repeat at the origin) and separates the double-stranded (ds)DNA. Forms a right-handed helical filament on oriC DNA; dsDNA binds to the exterior of the filament while single-stranded (ss)DNA is stabiized in the filament's interior. The ATP-DnaA-oriC complex binds and stabilizes one strand of the AT-rich DNA unwinding element (DUE), permitting loading of DNA polymerase. After initiation quickly degrades to an ADP-DnaA complex that is not apt for DNA replication. Binds acidic phospholipids. The polypeptide is Chromosomal replication initiator protein DnaA (Shewanella loihica (strain ATCC BAA-1088 / PV-4)).